Here is a 782-residue protein sequence, read N- to C-terminus: U-box domain-containing protein 7 (782 aa).

Positions 271–345 (VPPEELRCPI…ASWCEQNGTQ (75 aa)) constitute a U-box domain. 5 ARM repeats span residues 456 to 499 (EEAR…NLAV), 502 to 541 (NRNK…SCLD), 542 to 581 (EAKS…NLST), 583 to 623 (SPNI…NLAS), and 626 to 665 (EGKD…ILCN). Positions 707–729 (EERQQRDQPSSNRDEPPQKEPAR) are enriched in basic and acidic residues. The disordered stretch occupies residues 707–765 (EERQQRDQPSSNRDEPPQKEPARKSLSAPLSVHGSTPASASVQDYEPRVLSKSMSRRKS). Positions 739-748 (HGSTPASASV) are enriched in polar residues.

The enzyme catalyses S-ubiquitinyl-[E2 ubiquitin-conjugating enzyme]-L-cysteine + [acceptor protein]-L-lysine = [E2 ubiquitin-conjugating enzyme]-L-cysteine + N(6)-ubiquitinyl-[acceptor protein]-L-lysine.. The protein operates within protein modification; protein ubiquitination. Functions as an E3 ubiquitin ligase. The sequence is that of U-box domain-containing protein 7 (PUB7) from Arabidopsis thaliana (Mouse-ear cress).